The following is a 598-amino-acid chain: Elongation factor 4 (598 aa).

Residues 4 to 186 (INIRNFAIIA…AIVSRLPAPS (183 aa)) enclose the tr-type G domain. GTP contacts are provided by residues 16–21 (DHGKST) and 133–136 (NKID).

It belongs to the TRAFAC class translation factor GTPase superfamily. Classic translation factor GTPase family. LepA subfamily.

The protein localises to the cell inner membrane. The catalysed reaction is GTP + H2O = GDP + phosphate + H(+). Required for accurate and efficient protein synthesis under certain stress conditions. May act as a fidelity factor of the translation reaction, by catalyzing a one-codon backward translocation of tRNAs on improperly translocated ribosomes. Back-translocation proceeds from a post-translocation (POST) complex to a pre-translocation (PRE) complex, thus giving elongation factor G a second chance to translocate the tRNAs correctly. Binds to ribosomes in a GTP-dependent manner. This is Elongation factor 4 from Ehrlichia ruminantium (strain Welgevonden).